The primary structure comprises 609 residues: Leukotriene A-4 hydrolase (609 aa).

A peptide is bound by residues 131–133 (QCQ) and 263–268 (PYGGME). Residue His-292 coordinates Zn(2+). Glu-293 functions as the Proton acceptor in the catalytic mechanism. Zn(2+) is bound by residues His-296 and Glu-315. The active-site Proton donor is the Tyr-380. Residue 560-562 (RMK) participates in a peptide binding.

It belongs to the peptidase M1 family. In terms of assembly, homodimer. Zn(2+) is required as a cofactor. In terms of tissue distribution, expressed in oocytes.

It is found in the cytoplasm. The enzyme catalyses Release of the N-terminal residue from a tripeptide.. It catalyses the reaction leukotriene A4 + H2O = leukotriene B4. Its pathway is lipid metabolism; leukotriene B4 biosynthesis. The epoxide hydrolase activity is mildly restrained by suicide inactivation, possibly involving binding of LTA4 to Tyr-380. In terms of biological role, bifunctional zinc metalloenzyme that comprises both epoxide hydrolase (EH) and aminopeptidase activities. Acts as an epoxide hydrolase to catalyze the conversion of leukotriene A4 (LTA4) to the pro-inflammatory mediator leukotriene B4 (LTB4). During the conversion of LTA4 to LTB4, a second product is formed, the isomeric delta6-trans-delta8-cis-LTB4 (5S,12R-dihydroxy-6,10-trans-8,14-cis-eicosatetraenoic acid), with a relative formation of 10% delta6-trans-delta8-cis-LTB4 compared to 90% LTB4. The production of delta6-trans-delta8-cis-LTB4 seems to depend on the phenylalanine residue at position 375. Also has aminopeptidase activity. The sequence is that of Leukotriene A-4 hydrolase from Xenopus laevis (African clawed frog).